The sequence spans 222 residues: Methylthioribulose-1-phosphate dehydratase (222 aa).

Zn(2+)-binding residues include His-94 and His-96.

The protein belongs to the aldolase class II family. MtnB subfamily. It depends on Zn(2+) as a cofactor.

It catalyses the reaction 5-(methylsulfanyl)-D-ribulose 1-phosphate = 5-methylsulfanyl-2,3-dioxopentyl phosphate + H2O. It participates in amino-acid biosynthesis; L-methionine biosynthesis via salvage pathway; L-methionine from S-methyl-5-thio-alpha-D-ribose 1-phosphate: step 2/6. In terms of biological role, catalyzes the dehydration of methylthioribulose-1-phosphate (MTRu-1-P) into 2,3-diketo-5-methylthiopentyl-1-phosphate (DK-MTP-1-P). The chain is Methylthioribulose-1-phosphate dehydratase from Yersinia pseudotuberculosis serotype O:1b (strain IP 31758).